We begin with the raw amino-acid sequence, 168 residues long: Peptide deformylase 2 (168 aa).

Residues C91 and H133 each coordinate Fe cation. E134 is an active-site residue. Residue H137 participates in Fe cation binding.

Belongs to the polypeptide deformylase family. Fe(2+) is required as a cofactor.

The enzyme catalyses N-terminal N-formyl-L-methionyl-[peptide] + H2O = N-terminal L-methionyl-[peptide] + formate. Functionally, removes the formyl group from the N-terminal Met of newly synthesized proteins. Requires at least a dipeptide for an efficient rate of reaction. N-terminal L-methionine is a prerequisite for activity but the enzyme has broad specificity at other positions. The polypeptide is Peptide deformylase 2 (Vibrio cholerae serotype O1 (strain ATCC 39315 / El Tor Inaba N16961)).